Reading from the N-terminus, the 279-residue chain is Lacto-N-neotetraose biosynthesis glycosyltransferase LgtB (279 aa).

The protein belongs to the glycosyltransferase 25 family.

It participates in glycan metabolism; lacto-N-neotetraose biosynthesis. It functions in the pathway bacterial outer membrane biogenesis; lipooligosaccharide biosynthesis. Adds the second galactose to the lacto-N-tetraose chain in lipooligosaccharide (LOS). The sequence is that of Lacto-N-neotetraose biosynthesis glycosyltransferase LgtB (lgtB) from Neisseria gonorrhoeae.